The following is a 340-amino-acid chain: Glycerol-3-phosphate dehydrogenase [NAD(P)+] (340 aa).

Positions 14, 15, 35, and 108 each coordinate NADPH. The sn-glycerol 3-phosphate site is built by Lys-108 and Gly-136. Position 140 (Ala-140) interacts with NADPH. Lys-191, Asp-244, Ser-254, Arg-255, and Asn-256 together coordinate sn-glycerol 3-phosphate. Lys-191 functions as the Proton acceptor in the catalytic mechanism. Arg-255 contacts NADPH. Glu-281 serves as a coordination point for NADPH.

The protein belongs to the NAD-dependent glycerol-3-phosphate dehydrogenase family.

The protein resides in the cytoplasm. The catalysed reaction is sn-glycerol 3-phosphate + NAD(+) = dihydroxyacetone phosphate + NADH + H(+). It catalyses the reaction sn-glycerol 3-phosphate + NADP(+) = dihydroxyacetone phosphate + NADPH + H(+). It functions in the pathway membrane lipid metabolism; glycerophospholipid metabolism. Catalyzes the reduction of the glycolytic intermediate dihydroxyacetone phosphate (DHAP) to sn-glycerol 3-phosphate (G3P), the key precursor for phospholipid synthesis. The protein is Glycerol-3-phosphate dehydrogenase [NAD(P)+] of Pseudomonas paraeruginosa (strain DSM 24068 / PA7) (Pseudomonas aeruginosa (strain PA7)).